Here is a 1399-residue protein sequence, read N- to C-terminus: DNA-directed RNA polymerase subunit beta' (1399 aa).

The Zn(2+) site is built by C70, C72, C85, and C88. The Mg(2+) site is built by D460, D462, and D464. C814, C888, C895, and C898 together coordinate Zn(2+).

It belongs to the RNA polymerase beta' chain family. As to quaternary structure, the RNAP catalytic core consists of 2 alpha, 1 beta, 1 beta' and 1 omega subunit. When a sigma factor is associated with the core the holoenzyme is formed, which can initiate transcription. The cofactor is Mg(2+). It depends on Zn(2+) as a cofactor.

It catalyses the reaction RNA(n) + a ribonucleoside 5'-triphosphate = RNA(n+1) + diphosphate. Functionally, DNA-dependent RNA polymerase catalyzes the transcription of DNA into RNA using the four ribonucleoside triphosphates as substrates. This chain is DNA-directed RNA polymerase subunit beta', found in Pseudomonas fluorescens (strain SBW25).